Consider the following 490-residue polypeptide: MNDMAVRVRFCPSPTGTPHVGLIRTALFNWAYARHTGGTFVFRIEDTDSARDSEESYQAILDALNWLGLDYDEGPEIGGPYAPYRQSQRRDLYRDVIDRLIAAGEAYEAYSTAEEVEARHLAAGRNPKLGYDNFDRDLTDEQRAAHRAEGRNPVIRLRMPERDITWRDLVRGETTFGAGTMPDFALTRGNGEPLYTLVNPVDDALMKITHVLRGEDLLPSTPRQIALYEALIRIGVADGVPEFAHLPSVLGDGNKKLSKRDPQSNLFLHRDRGFIPEGLLNYLALLGWGIADDRDVFSLDEMVAAFDVVDVNSNPARFDQKKADALNAEHIRLLSEDEFTARLKAYFAAHGHDTGLDDAQFAEAARLVQTRIVVLGDAWGLLKFLDEGAFVLDEKAAAKELKADAVPVLDAALAGLEGVGQWTTGAIEEALKKALLEDLELKPRKAFGPIRVAATGASVSPPLFESLELLGRDRSLARLRAGRDHAAAAA.

The 'HIGH' region motif lies at 12–22 (PSPTGTPHVGL). Residues 256–260 (KLSKR) carry the 'KMSKS' region motif. K259 lines the ATP pocket.

Belongs to the class-I aminoacyl-tRNA synthetase family. Glutamate--tRNA ligase type 1 subfamily. In terms of assembly, monomer.

The protein localises to the cytoplasm. It carries out the reaction tRNA(Glu) + L-glutamate + ATP = L-glutamyl-tRNA(Glu) + AMP + diphosphate. Functionally, catalyzes the attachment of glutamate to tRNA(Glu) in a two-step reaction: glutamate is first activated by ATP to form Glu-AMP and then transferred to the acceptor end of tRNA(Glu). The sequence is that of Glutamate--tRNA ligase from Mycobacterium sp. (strain KMS).